Consider the following 315-residue polypeptide: AT-hook motif nuclear-localized protein 19 (315 aa).

Positions 1 to 25 (MANPWWTGQVNLSGLETTPPGSSQL) are enriched in polar residues. Disordered regions lie at residues 1 to 104 (MANP…RDSP) and 239 to 285 (EEEA…YNMP). The segment covering 61–74 (DNLSGDDHEPREGA) has biased composition (basic and acidic residues). Positions 80–92 (RRPRGRPAGSKNK) form a DNA-binding region, a.T hook. The PPC domain occupies 104 to 248 (PNALKSHVME…EEEAAERGGG (145 aa)). The segment covering 245-276 (RGGGGGSGGVVPGQLGGGGSPLSSGAGGGDGN) has biased composition (gly residues).

In terms of tissue distribution, slightly expressed in roots.

The protein localises to the nucleus. Its function is as follows. Transcription factor that specifically binds AT-rich DNA sequences related to the nuclear matrix attachment regions (MARs). Negatively regulates plant innate immunity (PTI) to pathogens through the down-regulation of the PAMP-triggered FRK1 expression. Positively regulates defense against fungal Verticillium infection. This chain is AT-hook motif nuclear-localized protein 19, found in Arabidopsis thaliana (Mouse-ear cress).